Consider the following 549-residue polypeptide: Polymorphic pseudokinase ROP5 (549 aa).

A signal peptide spans 1–24 (MATKLARLATWLVLVGCLLWRAGA). Residues 234 to 527 (LKLVEPLRVG…LEAMETPEFL (294 aa)) enclose the Protein kinase domain. Arg-241, Asp-244, Arg-245, Ser-246, Lys-263, Met-337, Pro-338, Ala-340, Asp-343, and Asp-393 together coordinate ATP. Asp-244 contacts ADP. 5 residues coordinate ADP: Ser-246, Lys-263, Met-337, Pro-338, and Ala-340. Asp-393 serves as a coordination point for ADP. Positions 393 and 407 each coordinate Mg(2+). The N-linked (GlcNAc...) asparagine glycan is linked to Asn-434. A disulfide bond links Cys-458 and Cys-492.

The protein belongs to the protein kinase superfamily. Ser/Thr protein kinase family. In terms of assembly, component of a complex at least composed of ROP18 and ROP5. Interacts with GRA7. Interacts with ROP17. Interacts with mouse IRGA6/IIGP1; the interaction results in inhibition of IRGA6/IIGP1 GTPase activity and/or oligomerization.

The protein localises to the secreted. It localises to the parasitophorous vacuole. It is found in the cytoplasmic vesicle. Its subcellular location is the secretory vesicle. The protein resides in the rhoptry. Functionally, pseudokinase. Essential for virulence in the type I lineage. Mediates parasite survival in mouse monocytes. Required for the parasite ability to resist mouse innate immune effectors triggered by the IFN-gamma (IFNG). Reduces the accumulation of mouse IRGA6 (IIGP1) and IRGB6 (TGTP1/TGTP2), immunity-related GTPases (IRGs) that protect mice from infection by certain intracellular pathogens, on the parasitophorous vacuole and IRG-mediated killing of parasites by mouse cells. Regulates the activity of ROP18, an active kinase that targets IRGs to prevent IRG-mediated parasite killing by mouse cells. Acts as an allosteric inhibitor of mouse IRGA6 (IIGP1). Does not affect IFN-gamma (IFNG)-mediated parasite killing in human cells that do not possess the large variety of IRGs. The protein is Polymorphic pseudokinase ROP5 of Toxoplasma gondii.